The primary structure comprises 73 residues: Translation initiation factor IF-1 (73 aa).

An S1-like domain is found at methionine 1 to lysine 73.

The protein belongs to the IF-1 family. In terms of assembly, component of the 30S ribosomal translation pre-initiation complex which assembles on the 30S ribosome in the order IF-2 and IF-3, IF-1 and N-formylmethionyl-tRNA(fMet); mRNA recruitment can occur at any time during PIC assembly.

Its subcellular location is the cytoplasm. In terms of biological role, one of the essential components for the initiation of protein synthesis. Stabilizes the binding of IF-2 and IF-3 on the 30S subunit to which N-formylmethionyl-tRNA(fMet) subsequently binds. Helps modulate mRNA selection, yielding the 30S pre-initiation complex (PIC). Upon addition of the 50S ribosomal subunit IF-1, IF-2 and IF-3 are released leaving the mature 70S translation initiation complex. The polypeptide is Translation initiation factor IF-1 (Cutibacterium acnes (strain DSM 16379 / KPA171202) (Propionibacterium acnes)).